A 147-amino-acid chain; its full sequence is uncharacterized protein (147 aa).

One can recognise an HTH LytTR-type domain in the interval 44–147 (LVGYIDKEIH…LKSIKERLSI (104 aa)).

Its subcellular location is the cytoplasm. This is an uncharacterized protein from Staphylococcus aureus (strain bovine RF122 / ET3-1).